The primary structure comprises 155 residues: Small ribosomal subunit protein uS7c (155 aa).

The protein belongs to the universal ribosomal protein uS7 family. In terms of assembly, part of the 30S ribosomal subunit.

The protein resides in the plastid. It is found in the chloroplast. In terms of biological role, one of the primary rRNA binding proteins, it binds directly to 16S rRNA where it nucleates assembly of the head domain of the 30S subunit. In Sagittaria latifolia (Broadleaf arrowhead), this protein is Small ribosomal subunit protein uS7c (rps7).